The following is a 440-amino-acid chain: 3-phosphoshikimate 1-carboxyvinyltransferase (440 aa).

Residues K19, S20, and R24 each coordinate 3-phosphoshikimate. K19 is a binding site for phosphoenolpyruvate. Residues G92 and R121 each contribute to the phosphoenolpyruvate site. 3-phosphoshikimate contacts are provided by S166, Q168, D315, and K342. Residue Q168 coordinates phosphoenolpyruvate. The Proton acceptor role is filled by D315. 2 residues coordinate phosphoenolpyruvate: R346 and R399.

This sequence belongs to the EPSP synthase family. As to quaternary structure, monomer.

The protein resides in the cytoplasm. The catalysed reaction is 3-phosphoshikimate + phosphoenolpyruvate = 5-O-(1-carboxyvinyl)-3-phosphoshikimate + phosphate. It functions in the pathway metabolic intermediate biosynthesis; chorismate biosynthesis; chorismate from D-erythrose 4-phosphate and phosphoenolpyruvate: step 6/7. Catalyzes the transfer of the enolpyruvyl moiety of phosphoenolpyruvate (PEP) to the 5-hydroxyl of shikimate-3-phosphate (S3P) to produce enolpyruvyl shikimate-3-phosphate and inorganic phosphate. This chain is 3-phosphoshikimate 1-carboxyvinyltransferase, found in Leptospira borgpetersenii serovar Hardjo-bovis (strain JB197).